Here is a 959-residue protein sequence, read N- to C-terminus: Alanine--tRNA ligase (959 aa).

Residue Ser389 is modified to Phosphoserine. Positions 606, 610, 725, and 729 each coordinate Zn(2+).

It belongs to the class-II aminoacyl-tRNA synthetase family. Monomer. Zn(2+) is required as a cofactor.

The protein localises to the mitochondrion. It is found in the cytoplasm. The catalysed reaction is tRNA(Ala) + L-alanine + ATP = L-alanyl-tRNA(Ala) + AMP + diphosphate. Its function is as follows. Catalyzes the attachment of alanine to tRNA(Ala) in a two-step reaction: alanine is first activated by ATP to form Ala-AMP and then transferred to the acceptor end of tRNA(Ala). Also edits incorrectly charged tRNA(Ala) via its editing domain. The protein is Alanine--tRNA ligase (ala1) of Schizosaccharomyces pombe (strain 972 / ATCC 24843) (Fission yeast).